A 534-amino-acid polypeptide reads, in one-letter code: (R)-citramalate synthase (534 aa).

Positions 11–274 constitute a Pyruvate carboxyltransferase domain; that stretch reads FHVFDTTLRD…KQVLPEGRLR (264 aa).

The protein belongs to the alpha-IPM synthase/homocitrate synthase family.

It catalyses the reaction pyruvate + acetyl-CoA + H2O = (3R)-citramalate + CoA + H(+). It functions in the pathway amino-acid biosynthesis; L-isoleucine biosynthesis; 2-oxobutanoate from pyruvate: step 1/3. Its function is as follows. Catalyzes the condensation of pyruvate and acetyl-coenzyme A to form (R)-citramalate. The protein is (R)-citramalate synthase of Streptomyces coelicolor (strain ATCC BAA-471 / A3(2) / M145).